The sequence spans 269 residues: NAD kinase (269 aa).

Asp-45 (proton acceptor) is an active-site residue. NAD(+) contacts are provided by residues 45–46 (DG), 121–122 (NE), Arg-147, Asp-149, 160–165 (TAYNRS), and Ala-184.

This sequence belongs to the NAD kinase family. A divalent metal cation serves as cofactor.

Its subcellular location is the cytoplasm. The catalysed reaction is NAD(+) + ATP = ADP + NADP(+) + H(+). Functionally, involved in the regulation of the intracellular balance of NAD and NADP, and is a key enzyme in the biosynthesis of NADP. Catalyzes specifically the phosphorylation on 2'-hydroxyl of the adenosine moiety of NAD to yield NADP. In Pediococcus pentosaceus (strain ATCC 25745 / CCUG 21536 / LMG 10740 / 183-1w), this protein is NAD kinase.